Consider the following 557-residue polypeptide: Urocanate hydratase (557 aa).

A disordered region spans residues 1–20; it reads MSNPRHNEREVRSPRGDELN. NAD(+) contacts are provided by residues 52 to 53, Gln130, 176 to 178, Glu196, Arg201, 242 to 243, 263 to 267, 273 to 274, and Tyr322; these read GG, GMG, NA, QTSAH, and YL. Cys410 is a catalytic residue. Position 492 (Gly492) interacts with NAD(+).

The protein belongs to the urocanase family. The cofactor is NAD(+).

It is found in the cytoplasm. The enzyme catalyses 4-imidazolone-5-propanoate = trans-urocanate + H2O. It participates in amino-acid degradation; L-histidine degradation into L-glutamate; N-formimidoyl-L-glutamate from L-histidine: step 2/3. Functionally, catalyzes the conversion of urocanate to 4-imidazolone-5-propionate. The protein is Urocanate hydratase of Brucella melitensis biotype 1 (strain ATCC 23456 / CCUG 17765 / NCTC 10094 / 16M).